We begin with the raw amino-acid sequence, 271 residues long: Acyl-[acyl-carrier-protein]--UDP-N-acetylglucosamine O-acyltransferase (271 aa).

Belongs to the transferase hexapeptide repeat family. LpxA subfamily. In terms of assembly, homotrimer.

It is found in the cytoplasm. The enzyme catalyses a (3R)-hydroxyacyl-[ACP] + UDP-N-acetyl-alpha-D-glucosamine = a UDP-3-O-[(3R)-3-hydroxyacyl]-N-acetyl-alpha-D-glucosamine + holo-[ACP]. Its pathway is glycolipid biosynthesis; lipid IV(A) biosynthesis; lipid IV(A) from (3R)-3-hydroxytetradecanoyl-[acyl-carrier-protein] and UDP-N-acetyl-alpha-D-glucosamine: step 1/6. Its function is as follows. Involved in the biosynthesis of lipid A, a phosphorylated glycolipid that anchors the lipopolysaccharide to the outer membrane of the cell. The chain is Acyl-[acyl-carrier-protein]--UDP-N-acetylglucosamine O-acyltransferase from Azorhizobium caulinodans (strain ATCC 43989 / DSM 5975 / JCM 20966 / LMG 6465 / NBRC 14845 / NCIMB 13405 / ORS 571).